Here is a 444-residue protein sequence, read N- to C-terminus: Glutamyl-tRNA reductase (444 aa).

Residues 49–52, S109, 114–116, and Q120 contribute to the substrate site; these read TCNR and ETQ. The active-site Nucleophile is C50. An NADP(+)-binding site is contributed by 189 to 194; sequence GAGKMG.

The protein belongs to the glutamyl-tRNA reductase family. Homodimer.

The catalysed reaction is (S)-4-amino-5-oxopentanoate + tRNA(Glu) + NADP(+) = L-glutamyl-tRNA(Glu) + NADPH + H(+). Its pathway is porphyrin-containing compound metabolism; protoporphyrin-IX biosynthesis; 5-aminolevulinate from L-glutamyl-tRNA(Glu): step 1/2. Functionally, catalyzes the NADPH-dependent reduction of glutamyl-tRNA(Glu) to glutamate 1-semialdehyde (GSA). The chain is Glutamyl-tRNA reductase from Bacillus cereus (strain ZK / E33L).